The chain runs to 255 residues: Acetylglutamate kinase (255 aa).

Residues 40-41, Arg-62, and Asn-153 contribute to the substrate site; that span reads GG.

It belongs to the acetylglutamate kinase family. ArgB subfamily.

The protein resides in the cytoplasm. It catalyses the reaction N-acetyl-L-glutamate + ATP = N-acetyl-L-glutamyl 5-phosphate + ADP. It functions in the pathway amino-acid biosynthesis; L-arginine biosynthesis; N(2)-acetyl-L-ornithine from L-glutamate: step 2/4. Catalyzes the ATP-dependent phosphorylation of N-acetyl-L-glutamate. This chain is Acetylglutamate kinase, found in Bacillus cereus (strain AH820).